A 439-amino-acid polypeptide reads, in one-letter code: uncharacterized protein (439 aa).

Residues 1-19 (MKKLLLTASIICLASAGLA) form the signal peptide.

This is an uncharacterized protein from Rickettsia felis (strain ATCC VR-1525 / URRWXCal2) (Rickettsia azadi).